Consider the following 402-residue polypeptide: Bisdemethoxycurcumin synthase (402 aa).

Catalysis depends on Cys174, which acts as the Acyl-thioester intermediate.

Belongs to the thiolase-like superfamily. Chalcone/stilbene synthases family. Homodimer.

The catalysed reaction is 2 4-coumaroyl-CoA + malonyl-CoA + H2O + H(+) = bisdemethoxycurcumin + 2 CO2 + 3 CoA. It functions in the pathway secondary metabolite biosynthesis; flavonoid biosynthesis. Plant-specific type III polyketide synthase (PKS) that catalyzes the one-pot formation of the C6-C7-C6 diarylheptanoid scaffold of bisdemethoxycurcumin by the condensation of two molecules of 4-coumaroyl-CoA and one molecule of malonyl-CoA. The polypeptide is Bisdemethoxycurcumin synthase (Oryza sativa subsp. japonica (Rice)).